The chain runs to 1050 residues: Sucrose-phosphate synthase 4 (1050 aa).

Residues 134-167 (QGRNDAEEDLLSELSEGEKDKNDGEKEKSEVVTT) are disordered. At serine 148 the chain carries Phosphoserine. Over residues 149–163 (EGEKDKNDGEKEKSE) the composition is skewed to basic and acidic residues. Serine 180 is modified (phosphoserine).

It belongs to the glycosyltransferase 1 family. Homodimer or homotetramer.

The enzyme catalyses beta-D-fructose 6-phosphate + UDP-alpha-D-glucose = sucrose 6(F)-phosphate + UDP + H(+). It participates in glycan biosynthesis; sucrose biosynthesis; sucrose from D-fructose 6-phosphate and UDP-alpha-D-glucose: step 1/2. With respect to regulation, activity is regulated by phosphorylation and moderated by concentration of metabolites and light. In terms of biological role, plays a role in photosynthetic sucrose synthesis by catalyzing the rate-limiting step of sucrose biosynthesis from UDP-glucose and fructose- 6-phosphate. Involved in the regulation of carbon partitioning in the leaves of plants. May regulate the synthesis of sucrose and therefore play a major role as a limiting factor in the export of photoassimilates out of the leaf. Plays a role for sucrose availability that is essential for plant growth and fiber elongation. This Arabidopsis thaliana (Mouse-ear cress) protein is Sucrose-phosphate synthase 4.